A 496-amino-acid chain; its full sequence is Probable E3 ubiquitin-protein ligase ARI12 (496 aa).

The tract at residues 110–319 is TRIAD supradomain; sequence NEYFCGACGE…GDLHFCTFDA (210 aa). Cysteine 114, cysteine 117, cysteine 131, histidine 133, cysteine 136, cysteine 139, cysteine 162, cysteine 172, cysteine 240, cysteine 243, histidine 248, cysteine 253, cysteine 267, cysteine 270, cysteine 286, and cysteine 289 together coordinate Zn(2+). An RING-type 1 zinc finger spans residues 114–172; that stretch reads CGACGESHPHKNLASVSCGHRICTRCWTSHINKIISEKPAAEWNLWLKCPVRVGLHASC. The segment at 191-253 adopts an IBR-type zinc-finger fold; sequence FNYNQYLLRS…REDAHSPVDC (63 aa). The segment at 267–297 adopts an RING-type 2; atypical zinc-finger fold; the sequence is CPKCKLRIPRNQDNSLKMKCLPCNYVFCWFC.

The protein belongs to the RBR family. Ariadne subfamily. The cofactor is Zn(2+). As to expression, preferentially expressed in roots.

The enzyme catalyses [E2 ubiquitin-conjugating enzyme]-S-ubiquitinyl-L-cysteine + [acceptor protein]-L-lysine = [E2 ubiquitin-conjugating enzyme]-L-cysteine + [acceptor protein]-N(6)-ubiquitinyl-L-lysine.. The protein operates within protein modification; protein ubiquitination. Might act as an E3 ubiquitin-protein ligase, or as part of E3 complex, which accepts ubiquitin from specific E2 ubiquitin-conjugating enzymes and then transfers it to substrates. This chain is Probable E3 ubiquitin-protein ligase ARI12 (ARI12), found in Arabidopsis thaliana (Mouse-ear cress).